The primary structure comprises 314 residues: Coiled-coil domain-containing protein 92 (314 aa).

Coiled coils occupy residues 1 to 27 (MAAT…HAST) and 59 to 113 (DSSS…EKKY). Disordered regions lie at residues 153-193 (LSSS…KKSL) and 251-314 (ASDR…DRTV). Residues 176–186 (PPKDKLPETPR) are compositionally biased toward basic and acidic residues. Ser-192 carries the phosphoserine modification. Residues 266–280 (KPHKTHVGVAHRIHH) show a composition bias toward basic residues.

In terms of assembly, interacts with CEP164. Phosphorylated at Ser-192 by TTBK2.

It is found in the cytoplasm. It localises to the cytoskeleton. The protein resides in the microtubule organizing center. Its subcellular location is the centrosome. The protein localises to the centriole. In terms of biological role, interferon-stimulated protein that plays a role in innate immunity. This is Coiled-coil domain-containing protein 92 (Ccdc92) from Mus musculus (Mouse).